Here is a 304-residue protein sequence, read N- to C-terminus: Ornithine carbamoyltransferase (304 aa).

Carbamoyl phosphate contacts are provided by residues 53-56 (STRT), glutamine 80, arginine 104, and 131-134 (HPCQ). L-ornithine contacts are provided by residues asparagine 162, aspartate 222, and 226-227 (SM). Residues 261-262 (CL) and arginine 289 each bind carbamoyl phosphate.

Belongs to the aspartate/ornithine carbamoyltransferase superfamily. OTCase family.

The protein resides in the cytoplasm. The catalysed reaction is carbamoyl phosphate + L-ornithine = L-citrulline + phosphate + H(+). It participates in amino-acid biosynthesis; L-arginine biosynthesis; L-arginine from L-ornithine and carbamoyl phosphate: step 1/3. In terms of biological role, reversibly catalyzes the transfer of the carbamoyl group from carbamoyl phosphate (CP) to the N(epsilon) atom of ornithine (ORN) to produce L-citrulline. This is Ornithine carbamoyltransferase from Rhizobium johnstonii (strain DSM 114642 / LMG 32736 / 3841) (Rhizobium leguminosarum bv. viciae).